We begin with the raw amino-acid sequence, 249 residues long: tRNA pseudouridine synthase A (249 aa).

The Nucleophile role is filled by D53. Y111 lines the substrate pocket.

Belongs to the tRNA pseudouridine synthase TruA family. Homodimer.

It catalyses the reaction uridine(38/39/40) in tRNA = pseudouridine(38/39/40) in tRNA. In terms of biological role, formation of pseudouridine at positions 38, 39 and 40 in the anticodon stem and loop of transfer RNAs. In Streptococcus pyogenes serotype M1, this protein is tRNA pseudouridine synthase A.